Consider the following 80-residue polypeptide: Acyl carrier protein (80 aa).

A Carrier domain is found at 4 to 79 (EAILEKVRSI…DAVKYIEDKQ (76 aa)). S39 carries the post-translational modification O-(pantetheine 4'-phosphoryl)serine.

The protein belongs to the acyl carrier protein (ACP) family. Post-translationally, 4'-phosphopantetheine is transferred from CoA to a specific serine of apo-ACP by AcpS. This modification is essential for activity because fatty acids are bound in thioester linkage to the sulfhydryl of the prosthetic group.

Its subcellular location is the cytoplasm. It functions in the pathway lipid metabolism; fatty acid biosynthesis. In terms of biological role, carrier of the growing fatty acid chain in fatty acid biosynthesis. This chain is Acyl carrier protein, found in Prochlorococcus marinus (strain SARG / CCMP1375 / SS120).